Here is a 157-residue protein sequence, read N- to C-terminus: MKLSLMVAISKNGVIGNGPDIPWSAKGEQLLFKAITYNQWLLVGRKTFESMGALPNRKYAVVTRSSFTSDNENVLIFPSIKDALTNLKKITDHVIVSGGGEIYKSLIDQVDTLHISTIDIEPEGDVYFPEIPSNFRPVFTQDFASNINYSYQIWQKG.

One can recognise a DHFR domain in the interval 2–156; it reads KLSLMVAISK…INYSYQIWQK (155 aa).

It belongs to the dihydrofolate reductase family. Homodimer.

The enzyme catalyses (6S)-5,6,7,8-tetrahydrofolate + NADP(+) = 7,8-dihydrofolate + NADPH + H(+). It participates in cofactor biosynthesis; tetrahydrofolate biosynthesis; 5,6,7,8-tetrahydrofolate from 7,8-dihydrofolate: step 1/1. Its function is as follows. Key enzyme in folate metabolism. Catalyzes an essential reaction for de novo glycine and purine synthesis, and for DNA precursor synthesis. This is Dihydrofolate reductase type 1 (dhfrI) from Escherichia coli.